The primary structure comprises 163 residues: 3-dehydroquinate dehydratase (163 aa).

The active-site Proton acceptor is Tyr-28. Substrate contacts are provided by Asn-80, His-86, and Asp-93. The active-site Proton donor is the His-106. Residues 107–108 (IS) and Arg-117 contribute to the substrate site.

It belongs to the type-II 3-dehydroquinase family. As to quaternary structure, homododecamer.

It catalyses the reaction 3-dehydroquinate = 3-dehydroshikimate + H2O. It participates in metabolic intermediate biosynthesis; chorismate biosynthesis; chorismate from D-erythrose 4-phosphate and phosphoenolpyruvate: step 3/7. Its function is as follows. Catalyzes a trans-dehydration via an enolate intermediate. This Bradyrhizobium sp. (strain BTAi1 / ATCC BAA-1182) protein is 3-dehydroquinate dehydratase.